The sequence spans 466 residues: Chromosomal replication initiator protein DnaA (466 aa).

Residues 1–86 (MSLSLWQQCL…EVGTKPVTQT (86 aa)) form a domain I, interacts with DnaA modulators region. The tract at residues 86-129 (TLKTPVHNVVAPTQTTTAQPQRVAPAARSGWDNVPAPAEPTYRS) is domain II. The domain III, AAA+ region stretch occupies residues 130–346 (NVNVKHTFDN…GALNRVIANA (217 aa)). Positions 174, 176, 177, and 178 each coordinate ATP. Residues 347–466 (NFTGRAITID…FSNLIRTLSS (120 aa)) form a domain IV, binds dsDNA region.

The protein belongs to the DnaA family. In terms of assembly, oligomerizes as a right-handed, spiral filament on DNA at oriC.

The protein resides in the cytoplasm. Its function is as follows. Plays an essential role in the initiation and regulation of chromosomal replication. ATP-DnaA binds to the origin of replication (oriC) to initiate formation of the DNA replication initiation complex once per cell cycle. Binds the DnaA box (a 9 base pair repeat at the origin) and separates the double-stranded (ds)DNA. Forms a right-handed helical filament on oriC DNA; dsDNA binds to the exterior of the filament while single-stranded (ss)DNA is stabiized in the filament's interior. The ATP-DnaA-oriC complex binds and stabilizes one strand of the AT-rich DNA unwinding element (DUE), permitting loading of DNA polymerase. After initiation quickly degrades to an ADP-DnaA complex that is not apt for DNA replication. Binds acidic phospholipids. The chain is Chromosomal replication initiator protein DnaA from Salmonella dublin (strain CT_02021853).